We begin with the raw amino-acid sequence, 474 residues long: Vasculin-like protein 1 (474 aa).

A disordered region spans residues 17–42 (QSAKSPTATFEKHGEHLPRGEGRFGV). The span at 26–38 (FEKHGEHLPRGEG) shows a compositional bias: basic and acidic residues. Residues serine 49 and serine 76 each carry the phosphoserine modification. Positions 91-191 (GNPSGWHSSS…VWENPPSAKQ (101 aa)) are disordered. The segment covering 116–128 (NHRHWNGSFHSRK) has biased composition (basic residues). Over residues 136 to 154 (PPMEIREEKKEDKVEKLQF) the composition is skewed to basic and acidic residues. Residue serine 202 is modified to Phosphoserine. Residues 238-371 (LVPKPVPPPS…EEGCHQNGLA (134 aa)) are disordered. The segment covering 262–277 (GSLSSSRESAFTSPIS) has biased composition (polar residues). Over residues 291–312 (SSPKESPSSTTPPIEISSSRLT) the composition is skewed to low complexity. Serine 292 bears the Phosphoserine mark. Threonine 301 bears the Phosphothreonine mark. Basic and acidic residues-rich tracts occupy residues 317-346 (RTTD…CDKL) and 356-365 (EPKENGEEGC). Serine 382 is modified (phosphoserine). A disordered region spans residues 453–474 (AEFEDSDTETSSSETSDDDAWK).

This sequence belongs to the vasculin family.

It is found in the nucleus. Functionally, possible transcription factor. In Homo sapiens (Human), this protein is Vasculin-like protein 1 (GPBP1L1).